Consider the following 682-residue polypeptide: Potassium-transporting ATPase ATP-binding subunit (682 aa).

Helical transmembrane passes span 35-55 (VMFIVWVGSLLTTLLAIAMAG), 62-82 (ATFTAAVSIWLWFTVLFANFA), 219-239 (IALTILLIALTLVFLLATATI), and 254-274 (VLVALLVCLIPTTIGGLLSAI). The 4-aspartylphosphate intermediate role is filled by aspartate 307. ATP contacts are provided by residues aspartate 344, glutamate 348, 377-384 (FTAQTRMS), and lysine 395. Residues aspartate 518 and aspartate 522 each coordinate Mg(2+). 3 consecutive transmembrane segments (helical) span residues 588 to 608 (FAIIPAAFAAVYPQLAMLNVM), 616 to 636 (AILSAVIFNALIIVFLIPLAL), and 656 to 676 (IYGLGGLLVPFIGIKAIDLLL).

The protein belongs to the cation transport ATPase (P-type) (TC 3.A.3) family. Type IA subfamily. In terms of assembly, the system is composed of three essential subunits: KdpA, KdpB and KdpC.

The protein localises to the cell inner membrane. It catalyses the reaction K(+)(out) + ATP + H2O = K(+)(in) + ADP + phosphate + H(+). Part of the high-affinity ATP-driven potassium transport (or Kdp) system, which catalyzes the hydrolysis of ATP coupled with the electrogenic transport of potassium into the cytoplasm. This subunit is responsible for energy coupling to the transport system and for the release of the potassium ions to the cytoplasm. The chain is Potassium-transporting ATPase ATP-binding subunit from Klebsiella pneumoniae subsp. pneumoniae (strain ATCC 700721 / MGH 78578).